Here is a 346-residue protein sequence, read N- to C-terminus: 3-dehydroquinate synthase (346 aa).

NAD(+) contacts are provided by residues 62–67 (DGEEYK), 96–100 (GVISD), 120–121 (TT), lysine 133, lysine 142, and 160–163 (FLRT). Glutamate 175, histidine 234, and histidine 251 together coordinate Zn(2+).

This sequence belongs to the sugar phosphate cyclases superfamily. Dehydroquinate synthase family. Requires Co(2+) as cofactor. Zn(2+) is required as a cofactor. It depends on NAD(+) as a cofactor.

It is found in the cytoplasm. It catalyses the reaction 7-phospho-2-dehydro-3-deoxy-D-arabino-heptonate = 3-dehydroquinate + phosphate. The protein operates within metabolic intermediate biosynthesis; chorismate biosynthesis; chorismate from D-erythrose 4-phosphate and phosphoenolpyruvate: step 2/7. In terms of biological role, catalyzes the conversion of 3-deoxy-D-arabino-heptulosonate 7-phosphate (DAHP) to dehydroquinate (DHQ). In Campylobacter curvus (strain 525.92), this protein is 3-dehydroquinate synthase.